The primary structure comprises 136 residues: Secreted RxLR effector protein 10 (136 aa).

Residues 1 to 22 form the signal peptide; it reads MRVLNFVLTTTVVLLTSSEGIA. Residues 42-56 carry the RxLR-dEER motif; it reads RSLRATENPGSDESR. The interval 42 to 78 is disordered; it reads RSLRATENPGSDESRLNEKDTGFDPDGSSSKEDEDIG. Over residues 53-63 the composition is skewed to basic and acidic residues; that stretch reads DESRLNEKDTG.

This sequence belongs to the RxLR effector family.

Its subcellular location is the secreted. It localises to the host cytoplasm. The protein localises to the host nucleus. In terms of biological role, effector that acts as a broad suppressor of cell death to interrupt plant immunity. Inhibits cell death induced by cell death-inducing proteins, including the PAMP elicitor INF1 from P.infestans. The protein is Secreted RxLR effector protein 10 of Plasmopara viticola (Downy mildew of grapevine).